Here is a 920-residue protein sequence, read N- to C-terminus: B3 domain-containing protein REM17 (920 aa).

DNA-binding regions (TF-B3) lie at residues N12–S105, R153–K250, and C267–T361. Disordered stretches follow at residues D405–V438, L540–S562, and D585–H614. Residues N423–S432 show a composition bias toward basic and acidic residues. A DNA-binding region (TF-B3 4) is located at residues S436–T531. 2 DNA-binding regions (TF-B3) span residues S616–E714 and Y727–A823. Low complexity predominate over residues N842 to D852. The interval N842–I870 is disordered.

Its subcellular location is the nucleus. The sequence is that of B3 domain-containing protein REM17 (REM17) from Arabidopsis thaliana (Mouse-ear cress).